The sequence spans 54 residues: U7-ctenitoxin-Pk1a (54 aa).

Intrachain disulfides connect C3/C17, C10/C23, C14/C52, C16/C37, and C25/C35.

Expressed by the venom gland.

The protein localises to the secreted. In terms of biological role, blocks voltage-gated sodium channels (Nav). Causes immediate spastic paralysis and death in mice within 1 minute of injection at dose levels of 1.5 ug per mouse. The chain is U7-ctenitoxin-Pk1a from Phoneutria keyserlingi (Brazilian wandering spider).